The chain runs to 449 residues: Tol-Pal system protein TolB (449 aa).

Positions 1 to 36 are cleaved as a signal peptide; it reads MDCPNMPLHINRRQMLLSAATAAGALALGPARDAFG.

Belongs to the TolB family. In terms of assembly, the Tol-Pal system is composed of five core proteins: the inner membrane proteins TolA, TolQ and TolR, the periplasmic protein TolB and the outer membrane protein Pal. They form a network linking the inner and outer membranes and the peptidoglycan layer.

The protein resides in the periplasm. Its function is as follows. Part of the Tol-Pal system, which plays a role in outer membrane invagination during cell division and is important for maintaining outer membrane integrity. The chain is Tol-Pal system protein TolB from Rhodopseudomonas palustris (strain HaA2).